Reading from the N-terminus, the 429-residue chain is Probable M18 family aminopeptidase 2 (429 aa).

Zn(2+) is bound by residues His-82, His-156, and His-401.

This sequence belongs to the peptidase M18 family. Zn(2+) is required as a cofactor.

The polypeptide is Probable M18 family aminopeptidase 2 (Pseudomonas savastanoi pv. phaseolicola (strain 1448A / Race 6) (Pseudomonas syringae pv. phaseolicola (strain 1448A / Race 6))).